Here is a 377-residue protein sequence, read N- to C-terminus: 3-dehydroquinate synthase (377 aa).

NAD(+)-binding positions include G115–D119, T139–S140, K152, and K161. Zn(2+) contacts are provided by E194, H256, and H275.

Belongs to the sugar phosphate cyclases superfamily. Dehydroquinate synthase family. NAD(+) serves as cofactor. It depends on Co(2+) as a cofactor. Requires Zn(2+) as cofactor.

Its subcellular location is the cytoplasm. It carries out the reaction 7-phospho-2-dehydro-3-deoxy-D-arabino-heptonate = 3-dehydroquinate + phosphate. The protein operates within metabolic intermediate biosynthesis; chorismate biosynthesis; chorismate from D-erythrose 4-phosphate and phosphoenolpyruvate: step 2/7. In terms of biological role, catalyzes the conversion of 3-deoxy-D-arabino-heptulosonate 7-phosphate (DAHP) to dehydroquinate (DHQ). The protein is 3-dehydroquinate synthase of Agrobacterium fabrum (strain C58 / ATCC 33970) (Agrobacterium tumefaciens (strain C58)).